The sequence spans 95 residues: Beta-defensin 132 (95 aa).

The signal sequence occupies residues 1–22 (MKFLLLVLAALGFLTQVIPASA). 3 disulfide bridges follow: cysteine 27-cysteine 55, cysteine 35-cysteine 49, and cysteine 39-cysteine 56. The tract at residues 74 to 95 (HWQSRRRNTQRKDKKQQTTVTS) is disordered. Positions 76 to 87 (QSRRRNTQRKDK) are enriched in basic residues.

This sequence belongs to the beta-defensin family.

The protein localises to the secreted. Functionally, has antibacterial activity. The polypeptide is Beta-defensin 132 (DEFB132) (Homo sapiens (Human)).